We begin with the raw amino-acid sequence, 96 residues long: Uteroglobin (96 aa).

A signal peptide spans 1 to 21; it reads MKIAITMAVVMLSVCCSSASS.

Belongs to the secretoglobin family. As to quaternary structure, antiparallel homodimer; disulfide-linked. Interaction with LMBR1L is controversial.

It localises to the secreted. Its function is as follows. Binds phosphatidylcholine, phosphatidylinositol, polychlorinated biphenyls (PCB) and weakly progesterone, potent inhibitor of phospholipase A2. This is Uteroglobin (SCGB1A1) from Mesocricetus auratus (Golden hamster).